The sequence spans 496 residues: Ammonium transporter 1 member 2 (496 aa).

Helical transmembrane passes span 39 to 59, 74 to 94, 120 to 140, 148 to 168, 192 to 212, 236 to 256, 274 to 296, 307 to 327, 331 to 351, 360 to 380, and 412 to 432; these read LLFS…LCAG, VLDA…FAFG, FFLF…GSIA, YLIY…HWIW, FAGS…GALI, LVVL…PGSF, SAVG…TTLF, VIDV…GCSV, WAAI…NALA, LEAA…TALF, and IVVI…LFLV.

Belongs to the ammonia transporter channel (TC 1.A.11.2) family. Expressed in exodermis, sclerenchyma, endodermis and pericycle cells of primary root tips.

The protein resides in the membrane. Ammonium transporter probably involved in ammonium uptake from the soil and ammonium uptake and retrieval in the vascular system. The sequence is that of Ammonium transporter 1 member 2 (AMT1-2) from Oryza sativa subsp. japonica (Rice).